We begin with the raw amino-acid sequence, 666 residues long: DNA ligase (666 aa).

NAD(+) is bound by residues 34–38, 83–84, and Glu-114; these read DAEYD and SL. Lys-116 acts as the N6-AMP-lysine intermediate in catalysis. 4 residues coordinate NAD(+): Arg-137, Glu-171, Lys-286, and Lys-310. Cys-404, Cys-407, Cys-422, and Cys-427 together coordinate Zn(2+). In terms of domain architecture, BRCT spans 588 to 666; it reads NTESTISEKS…EEFFAILKGE (79 aa).

The protein belongs to the NAD-dependent DNA ligase family. LigA subfamily. Mg(2+) is required as a cofactor. It depends on Mn(2+) as a cofactor.

The catalysed reaction is NAD(+) + (deoxyribonucleotide)n-3'-hydroxyl + 5'-phospho-(deoxyribonucleotide)m = (deoxyribonucleotide)n+m + AMP + beta-nicotinamide D-nucleotide.. Functionally, DNA ligase that catalyzes the formation of phosphodiester linkages between 5'-phosphoryl and 3'-hydroxyl groups in double-stranded DNA using NAD as a coenzyme and as the energy source for the reaction. It is essential for DNA replication and repair of damaged DNA. This Mesoplasma florum (strain ATCC 33453 / NBRC 100688 / NCTC 11704 / L1) (Acholeplasma florum) protein is DNA ligase.